We begin with the raw amino-acid sequence, 207 residues long: Peptidyl-prolyl cis-trans isomerase FKBP16-1, chloroplastic (207 aa).

The PPIase FKBP-type domain occupies G104–L207.

It belongs to the FKBP-type PPIase family.

Its subcellular location is the plastid. The protein resides in the chloroplast thylakoid lumen. The enzyme catalyses [protein]-peptidylproline (omega=180) = [protein]-peptidylproline (omega=0). Functionally, PPIases accelerate the folding of proteins. It catalyzes the cis-trans isomerization of proline imidic peptide bonds in oligopeptides. This is Peptidyl-prolyl cis-trans isomerase FKBP16-1, chloroplastic (FKBP16-1) from Arabidopsis thaliana (Mouse-ear cress).